Consider the following 430-residue polypeptide: Glutamate-1-semialdehyde 2,1-aminomutase (430 aa).

The residue at position 265 (lysine 265) is an N6-(pyridoxal phosphate)lysine.

The protein belongs to the class-III pyridoxal-phosphate-dependent aminotransferase family. HemL subfamily. Pyridoxal 5'-phosphate is required as a cofactor.

It localises to the cytoplasm. The enzyme catalyses (S)-4-amino-5-oxopentanoate = 5-aminolevulinate. It participates in porphyrin-containing compound metabolism; protoporphyrin-IX biosynthesis; 5-aminolevulinate from L-glutamyl-tRNA(Glu): step 2/2. This chain is Glutamate-1-semialdehyde 2,1-aminomutase, found in Caldivirga maquilingensis (strain ATCC 700844 / DSM 13496 / JCM 10307 / IC-167).